A 177-amino-acid polypeptide reads, in one-letter code: N5-carboxyaminoimidazole ribonucleotide mutase (177 aa).

S18, D21, and R48 together coordinate substrate.

It belongs to the AIR carboxylase family. Class I subfamily.

It carries out the reaction 5-carboxyamino-1-(5-phospho-D-ribosyl)imidazole + H(+) = 5-amino-1-(5-phospho-D-ribosyl)imidazole-4-carboxylate. It participates in purine metabolism; IMP biosynthesis via de novo pathway; 5-amino-1-(5-phospho-D-ribosyl)imidazole-4-carboxylate from 5-amino-1-(5-phospho-D-ribosyl)imidazole (N5-CAIR route): step 2/2. In terms of biological role, catalyzes the conversion of N5-carboxyaminoimidazole ribonucleotide (N5-CAIR) to 4-carboxy-5-aminoimidazole ribonucleotide (CAIR). The protein is N5-carboxyaminoimidazole ribonucleotide mutase of Pyrococcus horikoshii (strain ATCC 700860 / DSM 12428 / JCM 9974 / NBRC 100139 / OT-3).